The sequence spans 343 residues: tRNA-specific 2-thiouridylase MnmA (343 aa).

Residues 7-14 (ALSGGVDS) and Met-33 contribute to the ATP site. Residue Cys-87 is the Nucleophile of the active site. Cys-87 and Cys-184 are oxidised to a cystine. Gly-111 serves as a coordination point for ATP. The interval 135-137 (KDQ) is interaction with tRNA. Cys-184 acts as the Cysteine persulfide intermediate in catalysis. The segment at 289–290 (RY) is interaction with tRNA.

The protein belongs to the MnmA/TRMU family.

It is found in the cytoplasm. The catalysed reaction is S-sulfanyl-L-cysteinyl-[protein] + uridine(34) in tRNA + AH2 + ATP = 2-thiouridine(34) in tRNA + L-cysteinyl-[protein] + A + AMP + diphosphate + H(+). In terms of biological role, catalyzes the 2-thiolation of uridine at the wobble position (U34) of tRNA, leading to the formation of s(2)U34. In Desulforudis audaxviator (strain MP104C), this protein is tRNA-specific 2-thiouridylase MnmA.